Here is a 367-residue protein sequence, read N- to C-terminus: tRNA-specific 2-thiouridylase MnmA (367 aa).

ATP-binding positions include 12-19 and M38; that span reads GMSGGVDS. The interval 98–100 is interaction with target base in tRNA; the sequence is NPD. The active-site Nucleophile is C103. Residues C103 and C200 are joined by a disulfide bond. ATP is bound at residue G128. The segment at 150–152 is interaction with tRNA; the sequence is KDQ. C200 serves as the catalytic Cysteine persulfide intermediate. The tract at residues 312–313 is interaction with tRNA; it reads RY.

This sequence belongs to the MnmA/TRMU family. Interacts with TusE.

The protein localises to the cytoplasm. The catalysed reaction is S-sulfanyl-L-cysteinyl-[protein] + uridine(34) in tRNA + AH2 + ATP = 2-thiouridine(34) in tRNA + L-cysteinyl-[protein] + A + AMP + diphosphate + H(+). Its function is as follows. Catalyzes the 2-thiolation of uridine at the wobble position (U34) of tRNA(Lys), tRNA(Glu) and tRNA(Gln), leading to the formation of s(2)U34, the first step of tRNA-mnm(5)s(2)U34 synthesis. Sulfur is provided by IscS, via a sulfur-relay system. Binds ATP and its substrate tRNAs. The protein is tRNA-specific 2-thiouridylase MnmA of Proteus mirabilis (strain HI4320).